The primary structure comprises 353 residues: Uroporphyrinogen decarboxylase (353 aa).

Substrate is bound by residues 29–33 (RQAGR), D78, Y154, S209, and H322.

The protein belongs to the uroporphyrinogen decarboxylase family. Homodimer.

Its subcellular location is the cytoplasm. The catalysed reaction is uroporphyrinogen III + 4 H(+) = coproporphyrinogen III + 4 CO2. Its pathway is porphyrin-containing compound metabolism; protoporphyrin-IX biosynthesis; coproporphyrinogen-III from 5-aminolevulinate: step 4/4. In terms of biological role, catalyzes the decarboxylation of four acetate groups of uroporphyrinogen-III to yield coproporphyrinogen-III. This is Uroporphyrinogen decarboxylase from Bacillus velezensis (strain DSM 23117 / BGSC 10A6 / LMG 26770 / FZB42) (Bacillus amyloliquefaciens subsp. plantarum).